The sequence spans 429 residues: Septin-8 (429 aa).

Over residues 1-16 (MAATDLERVSNAEPEP) the composition is skewed to basic and acidic residues. Residues 1–23 (MAATDLERVSNAEPEPRSLSLGG) form a disordered region. Ala2 carries the post-translational modification N-acetylalanine. Ser10 bears the Phosphoserine mark. The region spanning 41-307 (QGFSFNILCV…ELYRRCKLEE (267 aa)) is the Septin-type G domain. The interval 51–58 (GETGIGKS) is G1 motif. GTP contacts are provided by residues 51–58 (GETGIGKS), Gly106, 187–195 (KADTISKSE), Gly241, and Arg256. The tract at residues 103–106 (DAVG) is G3 motif. A G4 motif region spans residues 186–189 (AKAD). The stretch at 320–412 (FSLQETYEAK…AAMEALQSQA (93 aa)) forms a coiled coil. Positions 409 to 420 (QSQALHATSQQP) are enriched in polar residues. Residues 409–429 (QSQALHATSQQPLRKDKDKKN) form a disordered region.

It belongs to the TRAFAC class TrmE-Era-EngA-EngB-Septin-like GTPase superfamily. Septin GTPase family. In terms of assembly, septins polymerize into heterooligomeric protein complexes that form filaments, and can associate with cellular membranes, actin filaments and microtubules. GTPase activity is required for filament formation. Interacts with SEPTIN5. Interacts with CDK14, SEPTIN4 and SEPTIN7. Interacts with VAMP2; the interaction inhibits interaction of VAMP2 with SYP. Interacts with STX1A.

It is found in the cytoplasm. The protein localises to the cytoskeleton. Its subcellular location is the synapse. The protein resides in the cell projection. It localises to the axon. It is found in the cytoplasmic vesicle. The protein localises to the secretory vesicle. Its subcellular location is the synaptic vesicle membrane. The protein resides in the presynapse. Filament-forming cytoskeletal GTPase. May play a role in platelet secretion. Seems to participate in the process of SNARE complex formation in synaptic vesicles. The polypeptide is Septin-8 (Mus musculus (Mouse)).